Reading from the N-terminus, the 76-residue chain is uncharacterized protein (76 aa).

This is an uncharacterized protein from Methanocaldococcus jannaschii (strain ATCC 43067 / DSM 2661 / JAL-1 / JCM 10045 / NBRC 100440) (Methanococcus jannaschii).